The primary structure comprises 271 residues: Putative phosphoenolpyruvate synthase regulatory protein (271 aa).

ADP is bound at residue 151 to 158; it reads GVSRSGKT.

This sequence belongs to the pyruvate, phosphate/water dikinase regulatory protein family. PSRP subfamily.

It catalyses the reaction [pyruvate, water dikinase] + ADP = [pyruvate, water dikinase]-phosphate + AMP + H(+). It carries out the reaction [pyruvate, water dikinase]-phosphate + phosphate + H(+) = [pyruvate, water dikinase] + diphosphate. In terms of biological role, bifunctional serine/threonine kinase and phosphorylase involved in the regulation of the phosphoenolpyruvate synthase (PEPS) by catalyzing its phosphorylation/dephosphorylation. This Burkholderia thailandensis (strain ATCC 700388 / DSM 13276 / CCUG 48851 / CIP 106301 / E264) protein is Putative phosphoenolpyruvate synthase regulatory protein.